Consider the following 595-residue polypeptide: Phenylalanine--tRNA ligase beta subunit (595 aa).

The segment at 86–90 (KLSKP) is 3'-CCA residue in tRNA. The 79-residue stretch at 292–370 (FNDRIMDVSI…VGYGFNNLPK (79 aa)) folds into the B5 domain. 4 residues coordinate Mg(2+): Asp348, Asp354, Glu357, and Asp358.

Belongs to the phenylalanyl-tRNA synthetase beta subunit family. Type 2 subfamily. In terms of assembly, tetramer of two alpha and two beta subunits. It depends on Mg(2+) as a cofactor.

The protein resides in the cytoplasm. It carries out the reaction tRNA(Phe) + L-phenylalanine + ATP = L-phenylalanyl-tRNA(Phe) + AMP + diphosphate + H(+). This Saccharomyces cerevisiae (strain ATCC 204508 / S288c) (Baker's yeast) protein is Phenylalanine--tRNA ligase beta subunit (FRS1).